The sequence spans 465 residues: Cysteine--tRNA ligase (465 aa).

Cysteine 30 is a Zn(2+) binding site. The short motif at 32–42 is the 'HIGH' region element; sequence ITVYDYCHVGH. 3 residues coordinate Zn(2+): cysteine 214, histidine 239, and glutamate 243. Residues 271–275 carry the 'KMSKS' region motif; that stretch reads KMSKS. Residue lysine 274 participates in ATP binding.

The protein belongs to the class-I aminoacyl-tRNA synthetase family. In terms of assembly, monomer. Requires Zn(2+) as cofactor.

It is found in the cytoplasm. It carries out the reaction tRNA(Cys) + L-cysteine + ATP = L-cysteinyl-tRNA(Cys) + AMP + diphosphate. The chain is Cysteine--tRNA ligase from Burkholderia orbicola (strain MC0-3).